A 413-amino-acid chain; its full sequence is Multifunctional CCA protein (413 aa).

ATP is bound by residues glycine 8 and arginine 11. Residues glycine 8 and arginine 11 each contribute to the CTP site. Aspartate 21 and aspartate 23 together coordinate Mg(2+). ATP-binding residues include arginine 91, arginine 143, and arginine 146. 3 residues coordinate CTP: arginine 91, arginine 143, and arginine 146. Positions 232–333 constitute an HD domain; it reads TGVHVMMVID…VRLLERADAL (102 aa).

The protein belongs to the tRNA nucleotidyltransferase/poly(A) polymerase family. Bacterial CCA-adding enzyme type 1 subfamily. As to quaternary structure, monomer. Can also form homodimers and oligomers. Mg(2+) is required as a cofactor. Ni(2+) serves as cofactor.

The catalysed reaction is a tRNA precursor + 2 CTP + ATP = a tRNA with a 3' CCA end + 3 diphosphate. The enzyme catalyses a tRNA with a 3' CCA end + 2 CTP + ATP = a tRNA with a 3' CCACCA end + 3 diphosphate. Its function is as follows. Catalyzes the addition and repair of the essential 3'-terminal CCA sequence in tRNAs without using a nucleic acid template. Adds these three nucleotides in the order of C, C, and A to the tRNA nucleotide-73, using CTP and ATP as substrates and producing inorganic pyrophosphate. tRNA 3'-terminal CCA addition is required both for tRNA processing and repair. Also involved in tRNA surveillance by mediating tandem CCA addition to generate a CCACCA at the 3' terminus of unstable tRNAs. While stable tRNAs receive only 3'-terminal CCA, unstable tRNAs are marked with CCACCA and rapidly degraded. The polypeptide is Multifunctional CCA protein (Burkholderia pseudomallei (strain 668)).